Consider the following 308-residue polypeptide: Oxygen-dependent coproporphyrinogen-III oxidase (308 aa).

Residue S100 participates in substrate binding. Residues H104 and H114 each contribute to the a divalent metal cation site. The active-site Proton donor is the H114. 116–118 serves as a coordination point for substrate; it reads NFR. A divalent metal cation is bound by residues H153 and H183. Residues 248–283 form an important for dimerization region; that stretch reads YVEFNLVFDRGTIFGLQSGGRTESILSSMPPMATWK. 266–268 contributes to the substrate binding site; it reads GGR.

The protein belongs to the aerobic coproporphyrinogen-III oxidase family. As to quaternary structure, homodimer. A divalent metal cation is required as a cofactor.

Its subcellular location is the cytoplasm. The catalysed reaction is coproporphyrinogen III + O2 + 2 H(+) = protoporphyrinogen IX + 2 CO2 + 2 H2O. It functions in the pathway porphyrin-containing compound metabolism; protoporphyrin-IX biosynthesis; protoporphyrinogen-IX from coproporphyrinogen-III (O2 route): step 1/1. Functionally, involved in the heme biosynthesis. Catalyzes the aerobic oxidative decarboxylation of propionate groups of rings A and B of coproporphyrinogen-III to yield the vinyl groups in protoporphyrinogen-IX. The sequence is that of Oxygen-dependent coproporphyrinogen-III oxidase from Francisella tularensis subsp. holarctica (strain LVS).